We begin with the raw amino-acid sequence, 316 residues long: D-alanine--D-alanine ligase (316 aa).

Residues 104 to 303 (KRVWLQHGLP…YADLCVAILA (200 aa)) enclose the ATP-grasp domain. 130–185 (PDRLGLPLILKPPHEGSTVGITKVAGYSDMKAAYELAARFDAEVLAEQFITGRELT) is an ATP binding site. 3 residues coordinate Mg(2+): Asp-257, Glu-270, and Asn-272.

It belongs to the D-alanine--D-alanine ligase family. Requires Mg(2+) as cofactor. It depends on Mn(2+) as a cofactor.

The protein localises to the cytoplasm. It catalyses the reaction 2 D-alanine + ATP = D-alanyl-D-alanine + ADP + phosphate + H(+). The protein operates within cell wall biogenesis; peptidoglycan biosynthesis. Cell wall formation. This chain is D-alanine--D-alanine ligase, found in Bordetella parapertussis (strain 12822 / ATCC BAA-587 / NCTC 13253).